The primary structure comprises 228 residues: MLSIERLGVGRGGQMVASGIDLCIEAGWALQIHGANGSGKTTLLRVLAGLMPPAGGQVSWYGANVRAHPEKFRRDLAFVGHANGVNDDLTVLENLRFATLLGAGSGAPDGTSSVPASGRSGVAAPPSRRDMLARAGMLPLQHTRAGCLSQGQRRRVALARLMLDRKPLWLLDEPGDALDDSASGWLHECLALHMQDGGIVVATTHRSLQTPAARTRHLHLERSGAWLD.

The ABC transporter domain maps to 2–227; the sequence is LSIERLGVGR…LHLERSGAWL (226 aa). 34-41 provides a ligand contact to ATP; sequence GANGSGKT. The tract at residues 106–126 is disordered; the sequence is GAPDGTSSVPASGRSGVAAPP.

The protein belongs to the ABC transporter superfamily. CcmA exporter (TC 3.A.1.107) family. As to quaternary structure, the complex is composed of two ATP-binding proteins (CcmA) and two transmembrane proteins (CcmB).

The protein resides in the cell inner membrane. It catalyses the reaction heme b(in) + ATP + H2O = heme b(out) + ADP + phosphate + H(+). Its function is as follows. Part of the ABC transporter complex CcmAB involved in the biogenesis of c-type cytochromes; once thought to export heme, this seems not to be the case, but its exact role is uncertain. Responsible for energy coupling to the transport system. The sequence is that of Cytochrome c biogenesis ATP-binding export protein CcmA from Paraburkholderia xenovorans (strain LB400).